A 498-amino-acid chain; its full sequence is DELTA-thalatoxin-Avl2a (498 aa).

The N-terminal stretch at 1–22 (MSPYFKLSSALIFLAITMEALC) is a signal peptide. Residues 23 to 35 (SPIENTSTSNKDN) constitute a propeptide that is removed on maturation. Positions 23-359 (SPIENTSTSN…GFLHFGCSFL (337 aa)) constitute an MACPF domain. Positions 135 to 159 (AAVTNNIASSEEEVQGLSLNLKAYS) form a coiled coil. 3 disulfide bridges follow: Cys-389–Cys-402, Cys-396–Cys-410, and Cys-412–Cys-422. Residues 410–422 (CECGGPYDLARTC) enclose the EGF-like domain.

It is found in the secreted. The protein resides in the nematocyst. In terms of biological role, is lethal to mice, and may cause hemolytic activity. This is DELTA-thalatoxin-Avl2a from Actineria villosa (Okinawan sea anemone).